The primary structure comprises 192 residues: MELASGTTLVAPQPKGILDPATGKPIGSNDAFFGEINNELADKGFLVTSTDELINWARTGSLMWMTFGLACCAVEMMQMSMPRYDAERFGFAPRASPRQSDVMIVAGTLTNKMAPALRKVYDQMPEPRYVISMGSCANGGGYYHYSYSVVRGCDRVVPVDIYVPGCPPTAEALLYGVLLLQKKIRRTGTIER.

Residues cysteine 71, cysteine 72, cysteine 136, and cysteine 166 each contribute to the [4Fe-4S] cluster site.

Belongs to the complex I 20 kDa subunit family. In terms of assembly, NDH-1 is composed of 14 different subunits. Subunits NuoB, C, D, E, F, and G constitute the peripheral sector of the complex. [4Fe-4S] cluster serves as cofactor.

Its subcellular location is the cell inner membrane. The catalysed reaction is a quinone + NADH + 5 H(+)(in) = a quinol + NAD(+) + 4 H(+)(out). Its function is as follows. NDH-1 shuttles electrons from NADH, via FMN and iron-sulfur (Fe-S) centers, to quinones in the respiratory chain. The immediate electron acceptor for the enzyme in this species is believed to be ubiquinone. Couples the redox reaction to proton translocation (for every two electrons transferred, four hydrogen ions are translocated across the cytoplasmic membrane), and thus conserves the redox energy in a proton gradient. This is NADH-quinone oxidoreductase subunit B 1 from Rhizobium meliloti (strain 1021) (Ensifer meliloti).